The primary structure comprises 166 residues: MAIKLEDKKAIVAEVNEAAKVALSAVVADARGVTVGAMTGLRKEAREAGVYVRVVRNTLLKRAVEGTEFSILNDAFKGPTLIAFSNEHPGAAARLFKEFAKGQDKFEIKAAAFDGKFLAANQIDVLATLPTRDEAIAQLMSVIQGATSKLARTLAALRDQKEAAAA.

This sequence belongs to the universal ribosomal protein uL10 family. In terms of assembly, part of the ribosomal stalk of the 50S ribosomal subunit. The N-terminus interacts with L11 and the large rRNA to form the base of the stalk. The C-terminus forms an elongated spine to which L12 dimers bind in a sequential fashion forming a multimeric L10(L12)X complex.

Forms part of the ribosomal stalk, playing a central role in the interaction of the ribosome with GTP-bound translation factors. In Pseudomonas entomophila (strain L48), this protein is Large ribosomal subunit protein uL10.